The primary structure comprises 235 residues: Urease accessory protein UreF (235 aa).

The protein belongs to the UreF family. In terms of assembly, ureD, UreF and UreG form a complex that acts as a GTP-hydrolysis-dependent molecular chaperone, activating the urease apoprotein by helping to assemble the nickel containing metallocenter of UreC. The UreE protein probably delivers the nickel.

It is found in the cytoplasm. Functionally, required for maturation of urease via the functional incorporation of the urease nickel metallocenter. The protein is Urease accessory protein UreF of Haemophilus influenzae (strain ATCC 51907 / DSM 11121 / KW20 / Rd).